Here is a 389-residue protein sequence, read N- to C-terminus: Phospholipid phosphatase-related protein type 2 (389 aa).

A run of 2 helical transmembrane segments spans residues 14–34 (IIPC…AFFP) and 66–86 (FLGV…AGQV). N-linked (GlcNAc...) asparagine glycosylation occurs at N102. 3 helical membrane-spanning segments follow: residues 147–167 (AALC…VFRV), 176–196 (SLCL…VAEY), and 203–223 (VLAG…CVVH). Phosphoserine occurs at positions 236 and 249. Disordered stretches follow at residues 255 to 280 (SVAQ…PQNC) and 295 to 351 (APAM…GRKL). Over residues 265-278 (SHSTPARLTPSKPQ) the composition is skewed to polar residues. Positions 314-339 (TPLPLPLPLPAPAPSQGPSPSSPGPG) are enriched in pro residues.

This sequence belongs to the PA-phosphatase related phosphoesterase family.

The protein localises to the membrane. This chain is Phospholipid phosphatase-related protein type 2, found in Bos taurus (Bovine).